We begin with the raw amino-acid sequence, 1004 residues long: Bifunctional glutamine synthetase adenylyltransferase/adenylyl-removing enzyme (1004 aa).

Positions 1–496 (MVRPPSARSA…LHAKLFYRPL (496 aa)) are adenylyl removase. The segment at 502 to 1004 (RMDPDALRLS…RAVVERVFGS (503 aa)) is adenylyl transferase.

The protein belongs to the GlnE family. Requires Mg(2+) as cofactor.

It carries out the reaction [glutamine synthetase]-O(4)-(5'-adenylyl)-L-tyrosine + phosphate = [glutamine synthetase]-L-tyrosine + ADP. The catalysed reaction is [glutamine synthetase]-L-tyrosine + ATP = [glutamine synthetase]-O(4)-(5'-adenylyl)-L-tyrosine + diphosphate. In terms of biological role, involved in the regulation of glutamine synthetase GlnA, a key enzyme in the process to assimilate ammonia. When cellular nitrogen levels are high, the C-terminal adenylyl transferase (AT) inactivates GlnA by covalent transfer of an adenylyl group from ATP to specific tyrosine residue of GlnA, thus reducing its activity. Conversely, when nitrogen levels are low, the N-terminal adenylyl removase (AR) activates GlnA by removing the adenylyl group by phosphorolysis, increasing its activity. The regulatory region of GlnE binds the signal transduction protein PII (GlnB) which indicates the nitrogen status of the cell. This Nocardia farcinica (strain IFM 10152) protein is Bifunctional glutamine synthetase adenylyltransferase/adenylyl-removing enzyme.